Reading from the N-terminus, the 278-residue chain is Elongation factor Ts (278 aa).

The segment at 82–85 is involved in Mg(2+) ion dislocation from EF-Tu; it reads TDFV.

The protein belongs to the EF-Ts family.

It is found in the cytoplasm. In terms of biological role, associates with the EF-Tu.GDP complex and induces the exchange of GDP to GTP. It remains bound to the aminoacyl-tRNA.EF-Tu.GTP complex up to the GTP hydrolysis stage on the ribosome. This is Elongation factor Ts from Streptomyces avermitilis (strain ATCC 31267 / DSM 46492 / JCM 5070 / NBRC 14893 / NCIMB 12804 / NRRL 8165 / MA-4680).